We begin with the raw amino-acid sequence, 107 residues long: Large ribosomal subunit protein P1 (107 aa).

A compositionally biased stretch (low complexity) spans 68-82 (PATAGAPAAAGAAAP). Positions 68–107 (PATAGAPAAAGAAAPAEEKKEEKEEEKEESDEDMGFGLFD) are disordered. Acidic residues predominate over residues 90-101 (KEEEKEESDEDM).

Belongs to the eukaryotic ribosomal protein P1/P2 family. In terms of assembly, P1 and P2 exist as dimers at the large ribosomal subunit.

Its subcellular location is the cytoplasm. Plays an important role in the elongation step of protein synthesis. The chain is Large ribosomal subunit protein P1 from Penicillium brevicompactum.